The sequence spans 228 residues: MNQSLLTPYGTAFERVEAGLTAIREGRGVLVVDDEDRENEGDIIFAAETLTSEQMALMIRECSGIVCLCLTDERVKQLELPMMVENNTSANETGFTVTIEAAKGVTTGVSAADRVTTIKTAIADGAVPADLNHPGHVFPLKANADGVLGRRGHTEATIDLMRLSGLKPYGVLCELTNIDGTMARLPEVIVFGKKFNMPVLTIEDLAAYRLAKESNTVTNTTEEVAVIA.

D-ribulose 5-phosphate-binding positions include 37–38 (RE), Asp42, 150–154 (RRGHT), and Glu174. Glu38 provides a ligand contact to Mg(2+). His153 is a Mg(2+) binding site.

This sequence belongs to the DHBP synthase family. As to quaternary structure, homodimer. The cofactor is Mg(2+). Requires Mn(2+) as cofactor.

It carries out the reaction D-ribulose 5-phosphate = (2S)-2-hydroxy-3-oxobutyl phosphate + formate + H(+). It participates in cofactor biosynthesis; riboflavin biosynthesis; 2-hydroxy-3-oxobutyl phosphate from D-ribulose 5-phosphate: step 1/1. Catalyzes the conversion of D-ribulose 5-phosphate to formate and 3,4-dihydroxy-2-butanone 4-phosphate. In Photobacterium profundum (strain SS9), this protein is 3,4-dihydroxy-2-butanone 4-phosphate synthase.